Consider the following 217-residue polypeptide: Outer-membrane lipoprotein LolB (217 aa).

An N-terminal signal peptide occupies residues 1 to 20 (MSRAVRTLALGGLVLVGLSA). Cys-21 carries N-palmitoyl cysteine lipidation. The S-diacylglycerol cysteine moiety is linked to residue Cys-21.

It belongs to the LolB family. Monomer.

The protein resides in the cell outer membrane. Plays a critical role in the incorporation of lipoproteins in the outer membrane after they are released by the LolA protein. In Xanthomonas euvesicatoria pv. vesicatoria (strain 85-10) (Xanthomonas campestris pv. vesicatoria), this protein is Outer-membrane lipoprotein LolB.